Consider the following 1405-residue polypeptide: MKDLLKFLKQQSKTEEFNGIKIGLASPDLIRSWSFGEVKKPETINYRTFKPEREGLFCARIFGPVKDYECLCGKYKRLKHRGVICEKCGVEVTQTKVRRERMGHIDLASPVAHIWFLKSLPSRIGLMLDMTLRDIERVLYFESFVVIEPGMTSLERGQMLTEENYLDALEEYGDEFEAKMGAEAVLELLRAIDLEKEIDMMREELPSINSETRRKKITKRLKLIEAFFQSGNKPEWMILKVLPVLPPDLRPLVPLDGGRFATSDLNDLYRRVINRNNRLKRLLDLAAPDIIVRNEKRMLQESVDALLDNGRRGRAITGSNKRPLKSLADMIKGKQGRFRQNLLGKRVDYSGRSVITVGPTLRLHQCGLPKKMALELFKPFIYGKLEGRGLATTIKAAKKMVEREVPEVWDVLDDVIREHPVMLNRAPTLHRLGIQAFEPVLIEGKAIQLHPLVCAAYNADFDGDQMAVHVPLTLEAQLEARSLMMSTNNILSPANGEPVITPSQDVVLGLYYTSRECVNGKGEGMAFESIDEVEKAYRTKVAAIHARIKVRVTETQIAENGERTESRRIVDTTVGRALLSRILPKGLSYDLVNQNMGKKQISKLLNTCYRQLGLKDTVIFADQLMYAGFHYATVSGASVGINDMVIPDEKYTLVADAEAEVLEIQEQFQSGLVTAGERYNKVIDIWASANEKVSKAMMANLSSETVINRDGEEEEQESFNSIYMMADSGARGSAAQIRQLAGMRGLMAKPDGSIIETPITANFREGLNVSQYFISTHGARKGLADTALKTANSGYLTRRLVDVAQDLVVIEEDCGTFEGLTMKPLIEGGDVVEPLRERVLGRVVAQDVLKPGTEEVLVPRNTLLDEAWCDIVEENSIDEMIVRSVISCDTDFGVCAACYGRDLARGHIINQGEAIGVVAAQSIGEPGTQLTMRTFHIGGAASRASAENNVQVKNLGTLKLHNAKYVTNSVGKLVIVSRSSELAIIDELGREKERYKVPYGTVLEKLEDDAVAAGEIIANWDPHTHPIVSEVAGSIKFVDMIEGVTMTRQTDELTGLSSIVVMEVGQRPSAGKEMRPAICLIGADGNDLMIPGTEVPAQYFLPGNAIVAQDDNAPINVGDALARIPQESSKTRDITGGLPRVADLFEARKPKEPAILAEHSGTISFGKETKGKRRLVITPADGGDHYEEMIPKWRNLNVFEGEKVERGEVIADGAEAAHDILRLRGIHKVANYIVNEVQDVYRLQGVKINDKHIEVIIRQMLRKCEITNAGDSEFLAGEQAEVSRVKIANRELEAQGKQPATFERELLGITKASLATESFISAASFQETTRVLTEAAVGGKSDKLRGLKENVIVGRLIPAGTGYSYHQKRNAETATGTDTEAAPVISASEAEQNLADLLNLAGSSD.

The Zn(2+) site is built by cysteine 70, cysteine 72, cysteine 85, and cysteine 88. Aspartate 460, aspartate 462, and aspartate 464 together coordinate Mg(2+). Positions 814, 888, 895, and 898 each coordinate Zn(2+).

It belongs to the RNA polymerase beta' chain family. In terms of assembly, the RNAP catalytic core consists of 2 alpha, 1 beta, 1 beta' and 1 omega subunit. When a sigma factor is associated with the core the holoenzyme is formed, which can initiate transcription. It depends on Mg(2+) as a cofactor. Requires Zn(2+) as cofactor.

The enzyme catalyses RNA(n) + a ribonucleoside 5'-triphosphate = RNA(n+1) + diphosphate. Its function is as follows. DNA-dependent RNA polymerase catalyzes the transcription of DNA into RNA using the four ribonucleoside triphosphates as substrates. In Shewanella woodyi (strain ATCC 51908 / MS32), this protein is DNA-directed RNA polymerase subunit beta'.